Here is a 377-residue protein sequence, read N- to C-terminus: Peptide chain release factor 2 (377 aa).

Q257 is modified (N5-methylglutamine).

The protein belongs to the prokaryotic/mitochondrial release factor family. In terms of processing, methylated by PrmC. Methylation increases the termination efficiency of RF2.

The protein resides in the cytoplasm. Peptide chain release factor 2 directs the termination of translation in response to the peptide chain termination codons UGA and UAA. This is Peptide chain release factor 2 from Lactiplantibacillus plantarum (strain ATCC BAA-793 / NCIMB 8826 / WCFS1) (Lactobacillus plantarum).